The chain runs to 230 residues: Uracil-DNA glycosylase (230 aa).

D70 functions as the Proton acceptor in the catalytic mechanism.

This sequence belongs to the uracil-DNA glycosylase (UDG) superfamily. UNG family.

The protein resides in the cytoplasm. The enzyme catalyses Hydrolyzes single-stranded DNA or mismatched double-stranded DNA and polynucleotides, releasing free uracil.. In terms of biological role, excises uracil residues from the DNA which can arise as a result of misincorporation of dUMP residues by DNA polymerase or due to deamination of cytosine. This Pseudomonas putida (strain ATCC 700007 / DSM 6899 / JCM 31910 / BCRC 17059 / LMG 24140 / F1) protein is Uracil-DNA glycosylase.